We begin with the raw amino-acid sequence, 258 residues long: Imidazole glycerol phosphate synthase subunit HisF (258 aa).

Catalysis depends on residues Asp12 and Asp131.

This sequence belongs to the HisA/HisF family. Heterodimer of HisH and HisF.

The protein resides in the cytoplasm. The enzyme catalyses 5-[(5-phospho-1-deoxy-D-ribulos-1-ylimino)methylamino]-1-(5-phospho-beta-D-ribosyl)imidazole-4-carboxamide + L-glutamine = D-erythro-1-(imidazol-4-yl)glycerol 3-phosphate + 5-amino-1-(5-phospho-beta-D-ribosyl)imidazole-4-carboxamide + L-glutamate + H(+). The protein operates within amino-acid biosynthesis; L-histidine biosynthesis; L-histidine from 5-phospho-alpha-D-ribose 1-diphosphate: step 5/9. IGPS catalyzes the conversion of PRFAR and glutamine to IGP, AICAR and glutamate. The HisF subunit catalyzes the cyclization activity that produces IGP and AICAR from PRFAR using the ammonia provided by the HisH subunit. This is Imidazole glycerol phosphate synthase subunit HisF from Sinorhizobium medicae (strain WSM419) (Ensifer medicae).